The sequence spans 444 residues: MNNLDNLAGNMSNLTIQGKGNETLISLDEYVNNILPSHLKKIFSDNLRENYQIPREFFESAELSGINNKIDQEIQKYSHLLKGLSNNGQTSFGSYLSNSNSFSGWSFIEGFIIGQFSVIIVLIFFIKFFVFSDGSSSNSSNPKPSLNSRSDRTSFSYKSNSMLSSNFFSSIMKRGGKTHYETDIDSGNTNRLNTILEKVYYDVDTHPSESLDWFNVLIAQTIQQFREEAWQRDNIVHSLNDFLHSKSSEMPSYLDDIKITELDIGDDFPIFSNCKIQYSPNSNKKKLEAKIYIDLNDRLAFGIETKLLVNYPKPRTAVLPVNLTVAIVRFQACLTVSLTNAEDFVPTTKETASSQDDDGYFLMFSFGPEYKMDFDIESLIGARSKLQNIPKISSVIEYHIKKWFVERCVEPRFQCIRLPSMWPRSKNTREEKVDTDDVPLSKAE.

The Lumenal segment spans residues 1-110 (MNNLDNLAGN…SFSGWSFIEG (110 aa)). Residues 111-131 (FIIGQFSVIIVLIFFIKFFVF) traverse the membrane as a helical segment. Residues 132-444 (SDGSSSNSSN…TDDVPLSKAE (313 aa)) lie on the Cytoplasmic side of the membrane. The region spanning 207–419 (PSESLDWFNV…EPRFQCIRLP (213 aa)) is the SMP-LTD domain.

It belongs to the MMM1 family. As to quaternary structure, homodimer. Component of the ER-mitochondria encounter structure (ERMES) or MDM complex, composed of MMM1, MDM10, MDM12 and MDM34. An MMM1 homodimer associates with one molecule of MDM12 on each side in a pairwise head-to-tail manner, and the SMP-LTD domains of MMM1 and MDM12 generate a continuous hydrophobic tunnel for phospholipid trafficking.

It localises to the endoplasmic reticulum membrane. In terms of biological role, component of the ERMES/MDM complex, which serves as a molecular tether to connect the endoplasmic reticulum (ER) and mitochondria. Components of this complex are involved in the control of mitochondrial shape and protein biogenesis, and function in nonvesicular lipid trafficking between the ER and mitochondria. The MDM12-MMM1 subcomplex functions in the major beta-barrel assembly pathway that is responsible for biogenesis of all outer membrane beta-barrel proteins, and acts in a late step after the SAM complex. The MDM10-MDM12-MMM1 subcomplex further acts in the TOM40-specific pathway after the action of the MDM12-MMM1 complex. Essential for establishing and maintaining the structure of mitochondria and maintenance of mtDNA nucleoids. The sequence is that of Maintenance of mitochondrial morphology protein 1 from Vanderwaltozyma polyspora (strain ATCC 22028 / DSM 70294 / BCRC 21397 / CBS 2163 / NBRC 10782 / NRRL Y-8283 / UCD 57-17) (Kluyveromyces polysporus).